The primary structure comprises 320 residues: Methionyl-tRNA formyltransferase (320 aa).

Residue 112–115 (SLLP) participates in (6S)-5,6,7,8-tetrahydrofolate binding.

It belongs to the Fmt family.

The enzyme catalyses L-methionyl-tRNA(fMet) + (6R)-10-formyltetrahydrofolate = N-formyl-L-methionyl-tRNA(fMet) + (6S)-5,6,7,8-tetrahydrofolate + H(+). Attaches a formyl group to the free amino group of methionyl-tRNA(fMet). The formyl group appears to play a dual role in the initiator identity of N-formylmethionyl-tRNA by promoting its recognition by IF2 and preventing the misappropriation of this tRNA by the elongation apparatus. This Allorhizobium ampelinum (strain ATCC BAA-846 / DSM 112012 / S4) (Agrobacterium vitis (strain S4)) protein is Methionyl-tRNA formyltransferase.